The sequence spans 111 residues: Universal stress protein B (111 aa).

The chain crosses the membrane as a helical span at residues 1 to 21 (MISTVSLFWALCVVCIVNMAR). The Cytoplasmic segment spans residues 22-89 (YFSSLRALLV…IRRCERVRRQ (68 aa)). A helical membrane pass occupies residues 90-110 (FLLTSALCGLVVVSLIALMIW). Residue His111 is a topological domain, periplasmic.

Belongs to the universal stress protein B family.

It is found in the cell inner membrane. In Salmonella choleraesuis (strain SC-B67), this protein is Universal stress protein B (uspB).